The chain runs to 133 residues: UPF0225 protein BP2036 (133 aa).

It belongs to the UPF0225 family.

The sequence is that of UPF0225 protein BP2036 from Bordetella pertussis (strain Tohama I / ATCC BAA-589 / NCTC 13251).